A 162-amino-acid chain; its full sequence is Large ribosomal subunit protein bL17 (162 aa).

Residues 125–140 (AAKEAPAKEVAEEKAA) show a composition bias toward basic and acidic residues. The tract at residues 125–162 (AAKEAPAKEVAEEKAAKPAKKAAPKKAEKEEAEDAAEA) is disordered.

It belongs to the bacterial ribosomal protein bL17 family. Part of the 50S ribosomal subunit. Contacts protein L32.

The chain is Large ribosomal subunit protein bL17 from Oleidesulfovibrio alaskensis (strain ATCC BAA-1058 / DSM 17464 / G20) (Desulfovibrio alaskensis).